A 95-amino-acid chain; its full sequence is Toxin HigB-1 (95 aa).

Its function is as follows. Toxic component of a type II toxin-antitoxin (TA) system. Inhibits translation by cleavage of mRNA. This is Toxin HigB-1 (higB-1) from Vibrio cholerae serotype O1 (strain ATCC 39315 / El Tor Inaba N16961).